Reading from the N-terminus, the 774-residue chain is Lysyl oxidase homolog 2 (774 aa).

An N-terminal signal peptide occupies residues 1–25 (MERPLCSHLCSCLAVLALLSPLSLA). 4 SRCR domains span residues 58 to 159 (LRLA…VVCS), 188 to 302 (IRAI…VSCV), 326 to 425 (VRLR…VRCN), and 435 to 544 (LRLN…VACS). Cystine bridges form between Cys84-Cys148, Cys97-Cys158, Cys128-Cys138, Cys218-Cys291, Cys231-Cys301, Cys265-Cys275, Cys351-Cys414, Cys364-Cys424, and Cys395-Cys405. Asn288 carries N-linked (GlcNAc...) asparagine glycosylation. Asn455 is a glycosylation site (N-linked (GlcNAc...) asparagine). Cystine bridges form between Cys464-Cys530, Cys477-Cys543, and Cys511-Cys521. The lysyl-oxidase like stretch occupies residues 548 to 751 (PDLVLNAEMV…WMYNCHIGGS (204 aa)). Asp549 and Leu550 together coordinate Ca(2+). 4 cysteine pairs are disulfide-bonded: Cys573/Cys625, Cys579/Cys695, Cys657/Cys673, and Cys663/Cys685. The Cu cation site is built by His626, His628, and His630. Asn644 is a glycosylation site (N-linked (GlcNAc...) asparagine). A cross-link (lysine tyrosylquinone (Lys-Tyr)) is located at residues 653 to 689 (KASFCLEDTECEGDIQKNYECANFGDQGITMGCWDMY). Tyr689 carries the post-translational modification 2',4',5'-topaquinone. Ca(2+) is bound by residues Glu722, Asp724, Asn727, and Asn728. An intrachain disulfide couples Cys732 to Cys746.

The protein belongs to the lysyl oxidase family. As to quaternary structure, component of some chromatin repressor complex. Interacts with SNAI1. Interacts with TAF10. Interacts with HSPA5. Interacts with EFEMP2. The cofactor is Cu cation. Requires lysine tyrosylquinone residue as cofactor. The lysine tyrosylquinone cross-link (LTQ) is generated by condensation of the epsilon-amino group of a lysine with a topaquinone produced by oxidation of tyrosine. In terms of processing, N-glycosylated. N-glycosylation on Asn-455 and Asn-644 may be essential for proper folding and secretion; may be composed of a fucosylated carbohydrates attached to a trimannose N-linked glycan core.

It is found in the secreted. The protein localises to the extracellular space. The protein resides in the extracellular matrix. It localises to the basement membrane. Its subcellular location is the nucleus. It is found in the chromosome. The protein localises to the endoplasmic reticulum. The enzyme catalyses L-lysyl-[protein] + O2 + H2O = (S)-2-amino-6-oxohexanoyl-[protein] + H2O2 + NH4(+). Its activity is regulated as follows. Specifically inhibited by a mouse monoclonal antibody AB0023, inhibition occurs in a non-competitive manner. Mediates the post-translational oxidative deamination of lysine residues on target proteins leading to the formation of deaminated lysine (allysine). Acts as a transcription corepressor and specifically mediates deamination of trimethylated 'Lys-4' of histone H3 (H3K4me3), a specific tag for epigenetic transcriptional activation. Shows no activity against histone H3 when it is trimethylated on 'Lys-9' (H3K9me3) or 'Lys-27' (H3K27me3) or when 'Lys-4' is monomethylated (H3K4me1) or dimethylated (H3K4me2). Also mediates deamination of methylated TAF10, a member of the transcription factor IID (TFIID) complex, which induces release of TAF10 from promoters, leading to inhibition of TFIID-dependent transcription. LOXL2-mediated deamination of TAF10 results in transcriptional repression of genes required for embryonic stem cell pluripotency including POU5F1/OCT4, NANOG, KLF4 and SOX2. Involved in epithelial to mesenchymal transition (EMT) via interaction with SNAI1 and participates in repression of E-cadherin CDH1, probably by mediating deamination of histone H3. During EMT, involved with SNAI1 in negatively regulating pericentromeric heterochromatin transcription. SNAI1 recruits LOXL2 to pericentromeric regions to oxidize histone H3 and repress transcription which leads to release of heterochromatin component CBX5/HP1A, enabling chromatin reorganization and acquisition of mesenchymal traits. Interacts with the endoplasmic reticulum protein HSPA5 which activates the IRE1-XBP1 pathway of the unfolded protein response, leading to expression of several transcription factors involved in EMT and subsequent EMT induction. When secreted into the extracellular matrix, promotes cross-linking of extracellular matrix proteins by mediating oxidative deamination of peptidyl lysine residues in precursors to fibrous collagen and elastin. Acts as a regulator of sprouting angiogenesis, probably via collagen IV scaffolding. Acts as a regulator of chondrocyte differentiation, probably by regulating expression of factors that control chondrocyte differentiation. This chain is Lysyl oxidase homolog 2 (LOXL2), found in Pongo abelii (Sumatran orangutan).